The following is a 374-amino-acid chain: Putative glutamate--cysteine ligase 2-1 (374 aa).

Belongs to the glutamate--cysteine ligase type 2 family. YbdK subfamily.

It carries out the reaction L-cysteine + L-glutamate + ATP = gamma-L-glutamyl-L-cysteine + ADP + phosphate + H(+). ATP-dependent carboxylate-amine ligase which exhibits weak glutamate--cysteine ligase activity. The polypeptide is Putative glutamate--cysteine ligase 2-1 (Saccharopolyspora erythraea (strain ATCC 11635 / DSM 40517 / JCM 4748 / NBRC 13426 / NCIMB 8594 / NRRL 2338)).